The following is a 548-amino-acid chain: Frizzled-7-B (548 aa).

Residues 1-18 (MLAPVSLLFCLFLQLCPS) form the signal peptide. Residues 19 to 230 (AQQYHGEKGI…EEEVRFARLW (212 aa)) are Extracellular-facing. Residues 31-150 (PDHGFCQPIS…HGAGEICVGQ (120 aa)) form the FZ domain. 5 disulfide bridges follow: Cys-36–Cys-97, Cys-44–Cys-90, Cys-81–Cys-118, Cys-107–Cys-147, and Cys-111–Cys-135. Residue Asn-50 is glycosylated (N-linked (GlcNAc...) asparagine). Asn-151 is a glycosylation site (N-linked (GlcNAc...) asparagine). A helical membrane pass occupies residues 231–251 (VGIWAILCGISTLFTVLTYLV). At 252 to 262 (DMRRFSYPERP) the chain is on the cytoplasmic side. The chain crosses the membrane as a helical span at residues 263-283 (IIFLSGCYFMVAVAYTAGFLL). Residues 284–311 (EERAVCVERFSEDSYRTVAQGTKKEGCT) lie on the Extracellular side of the membrane. A helical transmembrane segment spans residues 312–332 (ILFMILYFFGMASSIWWVILA). Over 333 to 353 (LTWFLSAGMKWGHEAIEANSQ) the chain is Cytoplasmic. Residues 354 to 374 (YFHLAAWAVPAVKTITILAMG) form a helical membrane-spanning segment. The Extracellular portion of the chain corresponds to 375 to 397 (QVDGDVLSGVCYVGINSVDSLRG). The helical transmembrane segment at 398–418 (FVLAPLFVYLFLGTSFLLAGF) threads the bilayer. Over 419–444 (VSLFRIRTIMKHDGTKTEKLEKLMVR) the chain is Cytoplasmic. A helical transmembrane segment spans residues 445-465 (IGVFSVMYTVPATIVLACYFY). The Extracellular portion of the chain corresponds to 466–502 (EQAFRDTWEKTWLVHTCKGYAVPCPNYNFAPMSPDFT). Residues 503 to 523 (VFMIKYLMTMIVGITSSFWIW) traverse the membrane as a helical segment. The Cytoplasmic segment spans residues 524–548 (SGKTLQSWRRFYHRLGNGSKGETAV). A Lys-Thr-X-X-X-Trp motif, mediates interaction with the PDZ domain of Dvl family members motif is present at residues 526 to 531 (KTLQSW). The short motif at 546–548 (TAV) is the PDZ-binding element.

This sequence belongs to the G-protein coupled receptor Fz/Smo family. As to quaternary structure, interacts with wnt11 and sdc4. The extracellular domain interacts with the extracellular domain of pcdh8/papc. Interacts (via C-terminus) with dvl1 (via PDZ domain). During gastrulation, broadly expressed on the dorsal side of the embryo in deep mesodermal cells surrounding the blastopore lip and in presumptive anterior neuroectoderm. During neurulation, localized to the cranial neural crest and heart field where expression is retained at later stages in addition to new areas of expression in the neural tube, pronephros and tailbud. At tailbud stage, expressed in the pronephric duct, and broad head expression becomes more restricted to the hindbrain. In tadpoles, strongly expressed in the eye and the pericardium and myocardium of the developing heart.

It is found in the cell membrane. The protein resides in the endosome membrane. Its function is as follows. Receptor for Wnt proteins. Acts in both canonical and non-canonical Wnt pathways. Although different papers report differing Wnt preferences, wnt5a, wnt8b and wnt11 have been proposed as synergists. In the canonical Wnt pathway, acts via beta-catenin to promote the expression of the dorsal genes siamois, twin and nodal3 and to establish the dorsal axis of the embryo and induce dorsal mesoderm formation. In a non-canonical Wnt/planar cell polarity (PCP) pathway, acts with sdc4 and dvl2/dsh to regulate convergent extension cell movements during gastrulation. Triggers phosphorylation of dvl2/dsh and its translocation to the plasma membrane. In a third branch of Wnt signaling, acts in a non-canonical pathway via trimeric G proteins, and independently of dvl2/dsh, to recruit protein kinase C (PKC) to the membrane and thus activate PKC. PKC signaling controls cell sorting and tissue separation during gastrulation. The sequence is that of Frizzled-7-B (fzd7-b) from Xenopus laevis (African clawed frog).